Consider the following 735-residue polypeptide: Peroxisomal multifunctional enzyme type 2 (735 aa).

Residues M1 to E305 form a (3R)-hydroxyacyl-CoA dehydrogenase region. NAD(+)-binding positions include L13–I37, L21, and D40. K46 is subject to N6-acetyllysine; alternate. At K46 the chain carries N6-succinyllysine; alternate. At S52 the chain carries Phosphoserine. N6-succinyllysine occurs at positions 57 and 68. Residue S75–V76 coordinates NAD(+). K84 is modified (N6-succinyllysine). N99 is an NAD(+) binding site. A substrate-binding site is contributed by S151. Y164 functions as the Proton acceptor in the catalytic mechanism. Residues Y164 to K168 and A196 to R199 contribute to the NAD(+) site. T265 bears the Phosphothreonine mark. An N6-succinyllysine modification is found at K275. S304 and S308 each carry phosphoserine. The enoyl-CoA hydratase 2 stretch occupies residues S321–L621. K355 carries the N6-succinyllysine modification. H405–G406 is a binding site for (3R)-3-hydroxydecanoyl-CoA. Position 423 is an N6-succinyllysine (K423). (3R)-3-hydroxydecanoyl-CoA contacts are provided by residues K434, D509–H514, G532, and F562. The region spanning V483–N599 is the MaoC-like domain. The residue at position 564 (K564) is an N6-acetyllysine. An N6-succinyllysine mark is found at K578 and K662. The SCP2 domain occupies S623–L735. The residue at position 668 (K668) is an N6-acetyllysine. Position 705 (Q705) interacts with substrate. N6-acetyllysine is present on K706. Q723 is a binding site for substrate. K724 carries the N6-succinyllysine modification. The short motif at A733–L735 is the Microbody targeting signal element.

Belongs to the short-chain dehydrogenases/reductases (SDR) family. As to quaternary structure, homodimer. In terms of tissue distribution, present in many tissues with highest concentrations in liver and kidney.

It localises to the peroxisome. It catalyses the reaction a (3R)-3-hydroxyacyl-CoA + NAD(+) = a 3-oxoacyl-CoA + NADH + H(+). The enzyme catalyses (24R,25R)-3alpha,7alpha,12alpha,24-tetrahydroxy-5beta-cholestan-26-oyl-CoA = (24E)-3alpha,7alpha,12alpha-trihydroxy-5beta-cholest-24-en-26-oyl-CoA + H2O. It carries out the reaction a (3R)-3-hydroxyacyl-CoA = a (2E)-enoyl-CoA + H2O. The catalysed reaction is (2E)-octenoyl-CoA + H2O = (3R)-hydroxyoctanoyl-CoA. It catalyses the reaction (3R)-hydroxyoctanoyl-CoA + NAD(+) = 3-oxooctanoyl-CoA + NADH + H(+). The enzyme catalyses (3R)-hydroxyhexadecanoyl-CoA + NAD(+) = 3-oxohexadecanoyl-CoA + NADH + H(+). It carries out the reaction (2E)-hexadecenedioyl-CoA + H2O = (3R)-hydroxyhexadecanedioyl-CoA. The catalysed reaction is (3R)-hydroxyhexadecanedioyl-CoA + NAD(+) = 3-oxohexadecanedioyl-CoA + NADH + H(+). It catalyses the reaction (3R)-hydroxyhexadecanoyl-CoA = (2E)-hexadecenoyl-CoA + H2O. The enzyme catalyses (3R)-3-hydroxydecanoyl-CoA = (2E)-decenoyl-CoA + H2O. It carries out the reaction (3R)-3-hydroxydecanoyl-CoA + NAD(+) = 3-oxodecanoyl-CoA + NADH + H(+). The catalysed reaction is (24R,25R)-3alpha,7alpha,12alpha,24-tetrahydroxy-5beta-cholestan-26-oyl-CoA + NAD(+) = 3alpha,7alpha,12alpha-trihydroxy-24-oxo-5beta-cholestan-26-oyl-CoA + NADH + H(+). Its pathway is lipid metabolism; fatty acid beta-oxidation. Its function is as follows. Bifunctional enzyme acting on the peroxisomal fatty acid beta-oxidation pathway. Catalyzes two of the four reactions in fatty acid degradation: hydration of 2-enoyl-CoA (trans-2-enoyl-CoA) to produce (3R)-3-hydroxyacyl-CoA, and dehydrogenation of (3R)-3-hydroxyacyl-CoA to produce 3-ketoacyl-CoA (3-oxoacyl-CoA), which is further metabolized by SCPx. Can use straight-chain and branched-chain fatty acids, as well as bile acid intermediates as substrates. This is Peroxisomal multifunctional enzyme type 2 from Mus musculus (Mouse).